A 320-amino-acid polypeptide reads, in one-letter code: Aspartate carbamoyltransferase catalytic subunit (320 aa).

2 residues coordinate carbamoyl phosphate: Arg-68 and Thr-69. Position 96 (Lys-96) interacts with L-aspartate. Residues Arg-118, His-148, and Gln-151 each coordinate carbamoyl phosphate. The L-aspartate site is built by Arg-181 and Arg-236. 2 residues coordinate carbamoyl phosphate: Gly-277 and Pro-278.

This sequence belongs to the aspartate/ornithine carbamoyltransferase superfamily. ATCase family. Heterododecamer (2C3:3R2) of six catalytic PyrB chains organized as two trimers (C3), and six regulatory PyrI chains organized as three dimers (R2).

The catalysed reaction is carbamoyl phosphate + L-aspartate = N-carbamoyl-L-aspartate + phosphate + H(+). It functions in the pathway pyrimidine metabolism; UMP biosynthesis via de novo pathway; (S)-dihydroorotate from bicarbonate: step 2/3. Functionally, catalyzes the condensation of carbamoyl phosphate and aspartate to form carbamoyl aspartate and inorganic phosphate, the committed step in the de novo pyrimidine nucleotide biosynthesis pathway. This is Aspartate carbamoyltransferase catalytic subunit from Delftia acidovorans (strain DSM 14801 / SPH-1).